Reading from the N-terminus, the 913-residue chain is Protein translocase subunit SecA (913 aa).

Residues Q87, 105-109 (GEGKT), and D512 contribute to the ATP site. Residues C897, C899, C908, and H909 each coordinate Zn(2+).

It belongs to the SecA family. Monomer and homodimer. Part of the essential Sec protein translocation apparatus which comprises SecA, SecYEG and auxiliary proteins SecDF-YajC and YidC. Zn(2+) is required as a cofactor.

It is found in the cell inner membrane. The protein localises to the cytoplasm. It carries out the reaction ATP + H2O + cellular proteinSide 1 = ADP + phosphate + cellular proteinSide 2.. In terms of biological role, part of the Sec protein translocase complex. Interacts with the SecYEG preprotein conducting channel. Has a central role in coupling the hydrolysis of ATP to the transfer of proteins into and across the cell membrane, serving both as a receptor for the preprotein-SecB complex and as an ATP-driven molecular motor driving the stepwise translocation of polypeptide chains across the membrane. This Pseudomonas fluorescens (strain ATCC BAA-477 / NRRL B-23932 / Pf-5) protein is Protein translocase subunit SecA.